An 86-amino-acid chain; its full sequence is Small ribosomal subunit protein uS15c (86 aa).

Belongs to the universal ribosomal protein uS15 family. In terms of assembly, part of the 30S ribosomal subunit.

The protein resides in the plastid. This Cuscuta gronovii (Common dodder) protein is Small ribosomal subunit protein uS15c (rps15).